Consider the following 186-residue polypeptide: MPYVRKTLETEVAVELRRGGDLAVETPIPFLTHMLETLLKYAGLGGVVKAVELRKLDDGHHVIEDVAIAVGRALDALLEDRRGIARFGHAVVPMDESIVMAAVDLGGRAYWVVRAKLPDVTIGGYPLRMFPHFVRTLAVEAKATIHIYARGTDPHHKVEAAHKALGLALRQALSPGEGLSTKGVLG.

This sequence belongs to the imidazoleglycerol-phosphate dehydratase family.

It localises to the cytoplasm. The enzyme catalyses D-erythro-1-(imidazol-4-yl)glycerol 3-phosphate = 3-(imidazol-4-yl)-2-oxopropyl phosphate + H2O. The protein operates within amino-acid biosynthesis; L-histidine biosynthesis; L-histidine from 5-phospho-alpha-D-ribose 1-diphosphate: step 6/9. In Pyrobaculum aerophilum (strain ATCC 51768 / DSM 7523 / JCM 9630 / CIP 104966 / NBRC 100827 / IM2), this protein is Imidazoleglycerol-phosphate dehydratase.